A 109-amino-acid chain; its full sequence is Mannose-specific lectin (109 aa).

The region spanning 1–109 (DNILYSSEVL…PPIWATGTGR (109 aa)) is the Bulb-type lectin domain. A disulfide bridge connects residues Cys-29 and Cys-52. Residues 79 to 82 (TGTN) constitute a propeptide that is removed on maturation.

In terms of assembly, homotrimer or homotetramer.

The protein resides in the secreted. Functionally, mannose-specific lectin. Shows agglutinating activity toward rabbit erythrocytes and mitogenic activity towards mouse lymphocytes. The polypeptide is Mannose-specific lectin (Aloe arborescens (Kidachi aloe)).